Here is a 73-residue protein sequence, read N- to C-terminus: NADH dehydrogenase [ubiquinone] 1 beta subcomplex subunit 3-B (73 aa).

A helical transmembrane segment spans residues 31–48; the sequence is ALPGLGIGVAAFCVYLVG.

This sequence belongs to the complex I NDUFB3 subunit family. Complex I is composed of at least 49 different subunits.

Its subcellular location is the mitochondrion inner membrane. Accessory subunit of the mitochondrial membrane respiratory chain NADH dehydrogenase (Complex I), that is believed not to be involved in catalysis. Complex I functions in the transfer of electrons from NADH to the respiratory chain. The immediate electron acceptor for the enzyme is believed to be ubiquinone. The chain is NADH dehydrogenase [ubiquinone] 1 beta subcomplex subunit 3-B from Arabidopsis thaliana (Mouse-ear cress).